A 293-amino-acid polypeptide reads, in one-letter code: ATP synthase gamma chain (293 aa).

The protein belongs to the ATPase gamma chain family. F-type ATPases have 2 components, CF(1) - the catalytic core - and CF(0) - the membrane proton channel. CF(1) has five subunits: alpha(3), beta(3), gamma(1), delta(1), epsilon(1). CF(0) has three main subunits: a, b and c.

It is found in the cell inner membrane. In terms of biological role, produces ATP from ADP in the presence of a proton gradient across the membrane. The gamma chain is believed to be important in regulating ATPase activity and the flow of protons through the CF(0) complex. The chain is ATP synthase gamma chain from Sinorhizobium fredii (strain NBRC 101917 / NGR234).